Consider the following 145-residue polypeptide: AP-2 complex subunit sigma (145 aa).

The protein belongs to the adaptor complexes small subunit family. In terms of assembly, adaptor protein complex 2 (AP-2) is a heterotetramer composed of two large adaptins (alpha-type subunit apl3 and beta-type subunit apl1), a medium chain (mu-type subunit apm4) and a small adaptin (sigma-type subunit aps2).

Its subcellular location is the cell membrane. It is found in the membrane. It localises to the coated pit. In terms of biological role, component of the adaptor complexes which link clathrin to receptors in coated vesicles. Clathrin-associated protein complexes are believed to interact with the cytoplasmic tails of membrane proteins, leading to their selection and concentration. The protein is AP-2 complex subunit sigma (aps2) of Emericella nidulans (strain FGSC A4 / ATCC 38163 / CBS 112.46 / NRRL 194 / M139) (Aspergillus nidulans).